We begin with the raw amino-acid sequence, 258 residues long: Acetylglutamate kinase (258 aa).

Substrate is bound by residues 44 to 45 (GG), R66, and N158. Residues 181-186 (DVSGIL) and 209-211 (IIT) each bind ATP.

Belongs to the acetylglutamate kinase family. ArgB subfamily. As to quaternary structure, homodimer.

It localises to the cytoplasm. It catalyses the reaction N-acetyl-L-glutamate + ATP = N-acetyl-L-glutamyl 5-phosphate + ADP. The protein operates within amino-acid biosynthesis; L-arginine biosynthesis; N(2)-acetyl-L-ornithine from L-glutamate: step 2/4. Catalyzes the ATP-dependent phosphorylation of N-acetyl-L-glutamate. The protein is Acetylglutamate kinase of Yersinia pestis bv. Antiqua (strain Antiqua).